A 1405-amino-acid chain; its full sequence is DNA-directed RNA polymerase subunit beta' (1405 aa).

Residues cysteine 65, cysteine 67, cysteine 80, and cysteine 83 each coordinate Zn(2+). Mg(2+) contacts are provided by aspartate 468, aspartate 470, and aspartate 472. Residues cysteine 811, cysteine 885, cysteine 892, and cysteine 895 each contribute to the Zn(2+) site.

The protein belongs to the RNA polymerase beta' chain family. As to quaternary structure, the RNAP catalytic core consists of 2 alpha, 1 beta, 1 beta' and 1 omega subunit. When a sigma factor is associated with the core the holoenzyme is formed, which can initiate transcription. The cofactor is Mg(2+). It depends on Zn(2+) as a cofactor.

It catalyses the reaction RNA(n) + a ribonucleoside 5'-triphosphate = RNA(n+1) + diphosphate. DNA-dependent RNA polymerase catalyzes the transcription of DNA into RNA using the four ribonucleoside triphosphates as substrates. The protein is DNA-directed RNA polymerase subunit beta' of Azobacteroides pseudotrichonymphae genomovar. CFP2.